Here is a 508-residue protein sequence, read N- to C-terminus: Maturase K (508 aa).

This sequence belongs to the intron maturase 2 family. MatK subfamily.

The protein resides in the plastid. The protein localises to the chloroplast. Functionally, usually encoded in the trnK tRNA gene intron. Probably assists in splicing its own and other chloroplast group II introns. The protein is Maturase K of Huidobria chilensis (Loasa chilensis).